The primary structure comprises 423 residues: Endoplasmic reticulum junction formation protein lunapark (423 aa).

At 1–45 (MGALLAKWRAKPSTVEVLEKMEKDIQSLEEFRDKNQKLRKIWVAR) the chain is on the cytoplasmic side. The stretch at 16-40 (EVLEKMEKDIQSLEEFRDKNQKLRK) forms a coiled coil. Residues 46–66 (LFFYSTILYILTSLTVYLWYL) form a helical membrane-spanning segment. Over 67-77 (PDGMTARLLTM) the chain is Lumenal. A helical transmembrane segment spans residues 78–98 (LLFLSFPVLIWFVRTLLILWF). The Cytoplasmic portion of the chain corresponds to 99–423 (SRRTERNNDA…ETEESFMETE (325 aa)). The stretch at 101–128 (RTERNNDALELLKTEKKKILEEVMEKET) forms a coiled coil. The segment at 147–169 (KELELPVPGPPITPRPGQDLRQR) is disordered. Threonine 159 bears the Phosphothreonine mark. Serine 177, serine 179, and serine 188 each carry phosphoserine. At threonine 198 the chain carries Phosphothreonine. The interval 200–247 (SLQRDTSAPGGPPERSVQPTPQSNILQRRPGSPATTVSGMAIHPPGPP) is disordered. Residues serine 206 and serine 215 each carry the phosphoserine modification. Positions 216 to 225 (VQPTPQSNIL) are enriched in polar residues. Threonine 219 carries the phosphothreonine modification. Residues serine 222 and serine 231 each carry the phosphoserine modification. A C4-type; plays a role in ER morphology zinc finger spans residues 280–305 (CQQCFSHNGMALKEEFEYVAFRCAYC). A disordered region spans residues 318–423 (APRLQEINFD…ETEESFMETE (106 aa)). The segment covering 334–343 (DSQGSVSSVQ) has biased composition (polar residues). Acidic residues-rich tracts occupy residues 370–391 (QAIE…DDSE) and 414–423 (ETEESFMETE).

It belongs to the lunapark family. Homodimer; homodimerization requires the C4-type zinc finger motif and decreases during mitosis in a phosphorylation-dependent manner. Post-translationally, phosphorylated. Phosphorylation at Thr-159 occurs during interphase. Phosphorylation at Ser-177, Ser-179, Ser-188, Thr-198, Ser-206, Ser-215, Thr-219, Ser-222 and Ser-231 occurs during mitosis; these phosphorylations reduce both its homodimerization and the ER three-way tubular junction formation.

The protein resides in the endoplasmic reticulum membrane. Functionally, endoplasmic reticulum (ER)-shaping membrane protein that plays a role in determining ER morphology. Involved in the stabilization of nascent three-way ER tubular junctions within the ER network. May also play a role as a curvature-stabilizing protein within three-way ER tubular junction network. In Xenopus tropicalis (Western clawed frog), this protein is Endoplasmic reticulum junction formation protein lunapark (lnpk).